A 204-amino-acid chain; its full sequence is Large ribosomal subunit protein eL15z (204 aa).

The protein belongs to the eukaryotic ribosomal protein eL15 family.

The chain is Large ribosomal subunit protein eL15z (SB61) from Picea mariana (Black spruce).